Reading from the N-terminus, the 212-residue chain is Adenine phosphoribosyltransferase (212 aa).

The protein belongs to the purine/pyrimidine phosphoribosyltransferase family. As to quaternary structure, homodimer.

The protein resides in the cytoplasm. The enzyme catalyses AMP + diphosphate = 5-phospho-alpha-D-ribose 1-diphosphate + adenine. The protein operates within purine metabolism; AMP biosynthesis via salvage pathway; AMP from adenine: step 1/1. Functionally, catalyzes a salvage reaction resulting in the formation of AMP, that is energically less costly than de novo synthesis. This is Adenine phosphoribosyltransferase from Mycobacterium tuberculosis (strain ATCC 25618 / H37Rv).